The primary structure comprises 1343 residues: DNA-directed RNA polymerase subunit beta (1343 aa).

The protein belongs to the RNA polymerase beta chain family. As to quaternary structure, the RNAP catalytic core consists of 2 alpha, 1 beta, 1 beta' and 1 omega subunit. When a sigma factor is associated with the core the holoenzyme is formed, which can initiate transcription.

The enzyme catalyses RNA(n) + a ribonucleoside 5'-triphosphate = RNA(n+1) + diphosphate. In terms of biological role, DNA-dependent RNA polymerase catalyzes the transcription of DNA into RNA using the four ribonucleoside triphosphates as substrates. The chain is DNA-directed RNA polymerase subunit beta from Shewanella sp. (strain W3-18-1).